Reading from the N-terminus, the 442-residue chain is Protein translocase subunit SecF (442 aa).

The segment at 1 to 39 is disordered; the sequence is MASKAKTGRDDEATSAVELTEATESAVARTDGDSTTDTA. The next 6 membrane-spanning stretches (helical) occupy residues 67-87, 187-207, 218-238, 243-263, 301-321, and 331-351; these read WFGVSGAIVAVAIASIVFRGF, ITKKAVIALVVFLVLVALYIT, AITAMLFDLTVTAGVYSLVGF, ATVIGLLTILGFSLYDTVIVF, LIGVLPVLALMVVAVWLLGVG, and LIGIIIGTYSSIFFATPLLVT. The tract at residues 366 to 442 is disordered; the sequence is VLKRRNSGSP…PTGKRNAGRR (77 aa). A compositionally biased stretch (low complexity) spans 402-432; sequence QASSQSAPRAAQGSSKPAPGARPVRPVGTRR. A compositionally biased stretch (basic residues) spans 433 to 442; the sequence is PTGKRNAGRR.

The protein belongs to the SecD/SecF family. SecF subfamily. Forms a complex with SecD. Part of the essential Sec protein translocation apparatus which comprises SecA, SecYEG and auxiliary proteins SecDF. Other proteins may also be involved.

The protein localises to the cell membrane. Functionally, part of the Sec protein translocase complex. Interacts with the SecYEG preprotein conducting channel. SecDF uses the proton motive force (PMF) to complete protein translocation after the ATP-dependent function of SecA. The chain is Protein translocase subunit SecF from Mycobacterium tuberculosis (strain ATCC 25618 / H37Rv).